The sequence spans 355 residues: Protein MGF 360-3L (355 aa).

Residues 60–92 (KLNTALVLAVKENNYDLIVLFTEWGANINYALL) form an ANK repeat.

The protein belongs to the asfivirus MGF 360 family.

Its function is as follows. Plays a role in virus cell tropism, and may be required for efficient virus replication in macrophages. This is Protein MGF 360-3L from Ornithodoros (relapsing fever ticks).